The sequence spans 178 residues: Ras-like protein (178 aa).

Position 1–6 (glycine 1–serine 6) interacts with GTP. The Effector region signature appears at tyrosine 21 to tyrosine 29. Residues aspartate 46–glutamine 50 and asparagine 105–aspartate 108 contribute to the GTP site. Residue cysteine 175 is modified to Cysteine methyl ester. Residue cysteine 175 is the site of S-geranylgeranyl cysteine attachment. A propeptide spans serine 176–leucine 178 (removed in mature form).

Belongs to the small GTPase superfamily. Ras family.

It localises to the cell membrane. The enzyme catalyses GTP + H2O = GDP + phosphate + H(+). Its activity is regulated as follows. Alternates between an inactive form bound to GDP and an active form bound to GTP. Activated by a guanine nucleotide-exchange factor (GEF) and inactivated by a GTPase-activating protein (GAP). In terms of biological role, ras proteins bind GDP/GTP and possess intrinsic GTPase activity. The chain is Ras-like protein from Artemia salina (Brine shrimp).